The chain runs to 589 residues: Netrin-G2 (589 aa).

The signal sequence occupies residues 1–17 (MLRLLALFLHCLPLVSG). Cystine bridges form between cysteine 22/cysteine 39, cysteine 61/cysteine 81, and cysteine 69/cysteine 77. One can recognise a Laminin N-terminal domain in the interval 35–286 (EFYACQPKVM…AISNIEVIGR (252 aa)). The segment at 69–88 (CSHENPYLCSNECDASNPDL) is NGL discriminant loop I. Residues asparagine 122 and asparagine 128 are each glycosylated (N-linked (GlcNAc...) asparagine). Residues cysteine 171 and cysteine 195 are joined by a disulfide bond. An NGL discriminant loop II region spans residues 201 to 203 (RWA). Positions 264–267 (TYVQ) are NGL discriminant loop III. Disulfide bonds link cysteine 287–cysteine 296, cysteine 289–cysteine 305, cysteine 307–cysteine 316, cysteine 319–cysteine 344, cysteine 413–cysteine 422, cysteine 415–cysteine 433, cysteine 436–cysteine 445, cysteine 448–cysteine 466, cysteine 469–cysteine 481, cysteine 471–cysteine 487, cysteine 489–cysteine 498, cysteine 501–cysteine 511, cysteine 516–cysteine 529, cysteine 523–cysteine 535, and cysteine 537–cysteine 546. Laminin EGF-like domains lie at 287–346 (CKCN…ACAA), 413–468 (CECY…VCIE), and 469–513 (CNCN…GCYP). Residue asparagine 310 is glycosylated (N-linked (GlcNAc...) asparagine). A glycan (N-linked (GlcNAc...) asparagine) is linked at asparagine 455. Asparagine 482 carries N-linked (GlcNAc...) asparagine glycosylation. A lipid anchor (GPI-anchor amidated glycine) is attached at glycine 566. A propeptide spans 567–589 (IVPRPDTLLGCLLLLGLAARLAC) (removed in mature form).

Interacts with LRRC4. In terms of processing, N-glycosylated. As to expression, expression is restricted primarily to neurons of the CNS, particularly in the cerebral cortex, habenular nucleus and superior colliculus. Low levels in lung, kidney, heart and spleen.

The protein localises to the cell membrane. In terms of biological role, involved in controlling patterning and neuronal circuit formation at the laminar, cellular, subcellular and synaptic levels. Promotes neurite outgrowth of both axons and dendrites. The protein is Netrin-G2 (Ntng2) of Mus musculus (Mouse).